We begin with the raw amino-acid sequence, 842 residues long: Elongation factor 2 (842 aa).

The region spanning 17-346 (TNVRNMSVIA…MIVMHLPSPV (330 aa)) is the tr-type G domain. Residues 26–33 (AHVDHGKS), 158–161 (NKVD), and 213–215 (SGL) contribute to the GTP site. Position 699 is a diphthamide (His699).

This sequence belongs to the TRAFAC class translation factor GTPase superfamily. Classic translation factor GTPase family. EF-G/EF-2 subfamily.

The protein localises to the cytoplasm. It carries out the reaction GTP + H2O = GDP + phosphate + H(+). In terms of biological role, catalyzes the GTP-dependent ribosomal translocation step during translation elongation. During this step, the ribosome changes from the pre-translocational (PRE) to the post-translocational (POST) state as the newly formed A-site-bound peptidyl-tRNA and P-site-bound deacylated tRNA move to the P and E sites, respectively. Catalyzes the coordinated movement of the two tRNA molecules, the mRNA and conformational changes in the ribosome. In Candida glabrata (strain ATCC 2001 / BCRC 20586 / JCM 3761 / NBRC 0622 / NRRL Y-65 / CBS 138) (Yeast), this protein is Elongation factor 2 (EFT1).